The sequence spans 269 residues: Phosphonoacetaldehyde hydrolase (269 aa).

Aspartate 10 serves as the catalytic Nucleophile. The Mg(2+) site is built by aspartate 10 and alanine 12. The active-site Schiff-base intermediate with substrate is the lysine 52. Residue aspartate 186 participates in Mg(2+) binding.

This sequence belongs to the HAD-like hydrolase superfamily. PhnX family. As to quaternary structure, homodimer. Mg(2+) serves as cofactor.

The catalysed reaction is phosphonoacetaldehyde + H2O = acetaldehyde + phosphate + H(+). Involved in phosphonate degradation. The polypeptide is Phosphonoacetaldehyde hydrolase (Klebsiella pneumoniae subsp. pneumoniae (strain ATCC 700721 / MGH 78578)).